The chain runs to 273 residues: MSVQSAIRRKTAPDLRIRKNGEPIVMLTSYHAHTAALVDRHCDAILVGDSLGNVMHGFETTVPVTLEMMILQGCAVMRGSSQALVVVDMPFGSYEGSKEQAFQSAVRIMKETLCGAVKLEGGARMAETVAFLSERGIPVMGHIGLTPQSINTLGSFRAQGREEANWAPIENDARAIAEAGAFSIVIEAVAEPLARKITQSIAVPTIGIGASAACDGQILVLEDMLGLSPRSPKFVRRYGNLGPAIEEAIAGYARDVKSRAFPGPEHVYDMKKS.

Residues Asp49 and Asp88 each contribute to the Mg(2+) site. Residues Asp49 to Ser50, Asp88, and Lys118 each bind 3-methyl-2-oxobutanoate. Residue Glu120 coordinates Mg(2+). Glu187 acts as the Proton acceptor in catalysis.

This sequence belongs to the PanB family. In terms of assembly, homodecamer; pentamer of dimers. Mg(2+) serves as cofactor.

It is found in the cytoplasm. It catalyses the reaction 3-methyl-2-oxobutanoate + (6R)-5,10-methylene-5,6,7,8-tetrahydrofolate + H2O = 2-dehydropantoate + (6S)-5,6,7,8-tetrahydrofolate. The protein operates within cofactor biosynthesis; (R)-pantothenate biosynthesis; (R)-pantoate from 3-methyl-2-oxobutanoate: step 1/2. In terms of biological role, catalyzes the reversible reaction in which hydroxymethyl group from 5,10-methylenetetrahydrofolate is transferred onto alpha-ketoisovalerate to form ketopantoate. In Bradyrhizobium diazoefficiens (strain JCM 10833 / BCRC 13528 / IAM 13628 / NBRC 14792 / USDA 110), this protein is 3-methyl-2-oxobutanoate hydroxymethyltransferase 3.